The sequence spans 425 residues: Succinyl-diaminopimelate desuccinylase (425 aa).

Residue histidine 96 coordinates Zn(2+). Aspartate 98 is an active-site residue. Aspartate 129 provides a ligand contact to Zn(2+). Glutamate 163 functions as the Proton acceptor in the catalytic mechanism. 3 residues coordinate Zn(2+): glutamate 164, glutamate 192, and histidine 378.

Belongs to the peptidase M20A family. DapE subfamily. As to quaternary structure, homodimer. Zn(2+) is required as a cofactor. It depends on Co(2+) as a cofactor.

It carries out the reaction N-succinyl-(2S,6S)-2,6-diaminopimelate + H2O = (2S,6S)-2,6-diaminopimelate + succinate. Its pathway is amino-acid biosynthesis; L-lysine biosynthesis via DAP pathway; LL-2,6-diaminopimelate from (S)-tetrahydrodipicolinate (succinylase route): step 3/3. Functionally, catalyzes the hydrolysis of N-succinyl-L,L-diaminopimelic acid (SDAP), forming succinate and LL-2,6-diaminopimelate (DAP), an intermediate involved in the bacterial biosynthesis of lysine and meso-diaminopimelic acid, an essential component of bacterial cell walls. The polypeptide is Succinyl-diaminopimelate desuccinylase (Polaromonas sp. (strain JS666 / ATCC BAA-500)).